Consider the following 538-residue polypeptide: Phosphoenolpyruvate carboxykinase (ATP) (538 aa).

Arg61, Tyr195, and Lys201 together coordinate substrate. Residues Lys201, His220, and 236–244 (GLSGTGKTT) each bind ATP. Lys201 and His220 together coordinate Mn(2+). Asp257 contacts Mn(2+). 3 residues coordinate ATP: Glu285, Arg323, and Thr449. Arg323 serves as a coordination point for substrate.

Belongs to the phosphoenolpyruvate carboxykinase (ATP) family. Requires Mn(2+) as cofactor.

It localises to the cytoplasm. The enzyme catalyses oxaloacetate + ATP = phosphoenolpyruvate + ADP + CO2. Its pathway is carbohydrate biosynthesis; gluconeogenesis. Functionally, involved in the gluconeogenesis. Catalyzes the conversion of oxaloacetate (OAA) to phosphoenolpyruvate (PEP) through direct phosphoryl transfer between the nucleoside triphosphate and OAA. In Bradyrhizobium diazoefficiens (strain JCM 10833 / BCRC 13528 / IAM 13628 / NBRC 14792 / USDA 110), this protein is Phosphoenolpyruvate carboxykinase (ATP).